Consider the following 207-residue polypeptide: Vascular endothelial growth factor B (207 aa).

A signal peptide spans 1–21; the sequence is MSPLLRRLLLVALLQLARTQA. 3 disulfide bridges follow: Cys-47–Cys-89, Cys-78–Cys-122, and Cys-82–Cys-124. Residues 129-139 show a composition bias toward basic and acidic residues; it reads KESAVKPDRVA. Residues 129 to 178 are disordered; sequence KESAVKPDRVAIPHHRPQPRSVPGWDSTPGASSPADIIHPTPAPGSSARL.

The protein belongs to the PDGF/VEGF growth factor family. In terms of assembly, homodimer; disulfide-linked. Can also form heterodimer with VEGF. Post-translationally, VEGF-B186 is O-glycosylated. As to expression, abundantly expressed in heart, brain, kidney and skeletal muscle.

Its subcellular location is the secreted. Growth factor for endothelial cells. VEGF-B167 binds heparin and neuropilin-1 whereas the binding to neuropilin-1 of VEGF-B186 is regulated by proteolysis. VEGF-B seems to be required for normal heart function in adult but is not required for proper development of the cardiovascular system either during development or for angiogenesis in adults. This is Vascular endothelial growth factor B (Vegfb) from Mus musculus (Mouse).